We begin with the raw amino-acid sequence, 618 residues long: DNA mismatch repair protein MutL (618 aa).

This sequence belongs to the DNA mismatch repair MutL/HexB family.

This protein is involved in the repair of mismatches in DNA. It is required for dam-dependent methyl-directed DNA mismatch repair. May act as a 'molecular matchmaker', a protein that promotes the formation of a stable complex between two or more DNA-binding proteins in an ATP-dependent manner without itself being part of a final effector complex. This Porphyromonas gingivalis (strain ATCC 33277 / DSM 20709 / CIP 103683 / JCM 12257 / NCTC 11834 / 2561) protein is DNA mismatch repair protein MutL.